The primary structure comprises 662 residues: Hypoxia-inducible factor 3-alpha (662 aa).

Positions 1–25 are disordered; the sequence is MDWDQDRSSTELRKEKSRDAARSRR. Residues 12 to 65 enclose the bHLH domain; sequence LRKEKSRDAARSRRSQETEVLYQLAHTLPFARGVSAHLDKASIMRLTISYLRMH. The interval 75-98 is nuclear localization signal; sequence QVRKEGEPLDACYLKALEGFVMVL. 2 consecutive PAS domains span residues 80 to 150 and 225 to 295; these read GEPL…PSLS and PHPA…LSKG. The segment at 228–272 is nuclear export signal; that stretch reads ASLEPPLGRGAFLSRHSLDMKFTYCDERIAEVAGYSPDDLIGCSA. The segment at 352-379 is disordered; the sequence is EQTEQHTRRPPQLGTSSKKGIPGNSLDP. An LRRLL motif is present at residues 410–413; the sequence is LRRL. Disordered stretches follow at residues 417–445 and 459–480; these read ILDG…ADLP and STAR…PDTP. A compositionally biased stretch (low complexity) spans 421–433; sequence PPTAATPSTPQAA. Positions 448 to 581 are ODD; it reads LAVGLENAHR…SEDKGLELLE (134 aa). The tract at residues 450 to 501 is NTAD; that stretch reads VGLENAHRLSTARKNKTMETDLDIAQDPDTPDLEMLAPYISMDDDFQLNSSE. Lys-463 participates in a covalent cross-link: Glycyl lysine isopeptide (Lys-Gly) (interchain with G-Cter in ubiquitin). Residues 469-480 show a composition bias toward acidic residues; the sequence is TDLDIAQDPDTP. The LAPYISMD motif lies at 485-492; it reads LAPYISMD. Pro-487 is subject to 4-hydroxyproline. The disordered stretch occupies residues 500–595; it reads SEQLPKVHRR…KRSPRLEPGS (96 aa). The span at 505-521 shows a compositional bias: basic residues; that stretch reads KVHRRPPRTARRPRARS. Lys-565 is covalently cross-linked (Glycyl lysine isopeptide (Lys-Gly) (interchain with G-Cter in ubiquitin)). The segment covering 572-584 has biased composition (basic and acidic residues); that stretch reads SEDKGLELLETKP.

As to quaternary structure, interacts with ARNT, BAD, BCL2L2, EPAS1, HIF1A, MCL1 and VHL. In terms of processing, in normoxia, hydroxylated on Pro-487 in the oxygen-dependent degradation domain (ODD) by PHD. The hydroxylated proline promotes interaction with VHL, initiating rapid ubiquitination and subsequent proteasomal degradation. Post-translationally, ubiquitinated; ubiquitination occurs in a VHL- and oxygen-dependent pathway and subsequently targeted for proteasomal degradation. Expressed in the perivenous zone of the liver. Expressed in all tissues examined during normoxia. Expressed in brain and lung. Expressed in periportal and perivenous hepatocytes and in endothelial cells of the central vein (at protein level). Highest expression seen in the cerebral cortex, hippocampus, and lung. Low expression in myocardial tissue and liver.

It is found in the nucleus. It localises to the cytoplasm. Its subcellular location is the nucleus speckle. The protein localises to the mitochondrion. In terms of biological role, acts as a transcriptional regulator in adaptive response to low oxygen tension. Attenuates the ability of transcription factor HIF1A, EPAS1 and the HIF1A-ARNT complex to bind to hypoxia-responsive elements (HRE) located within the enhancer/promoter of hypoxia-inducible target genes and hence inhibits HRE-driven transcriptional activation. Functions as an inhibitor of angiogenesis in hypoxic cells of the cornea. Plays a role in the development of the cardiorespiratory system. May also be involved in apoptosis. May act as a tumor suppressor. In Rattus norvegicus (Rat), this protein is Hypoxia-inducible factor 3-alpha.